The following is a 350-amino-acid chain: tRNA uridine(34) hydroxylase (350 aa).

The Rhodanese domain maps to 146–240; sequence DDPDALFIDM…YARKARDQGL (95 aa). Residue Cys200 is the Cysteine persulfide intermediate of the active site.

It belongs to the TrhO family.

It carries out the reaction uridine(34) in tRNA + AH2 + O2 = 5-hydroxyuridine(34) in tRNA + A + H2O. In terms of biological role, catalyzes oxygen-dependent 5-hydroxyuridine (ho5U) modification at position 34 in tRNAs, the first step in 5-carboxymethoxyuridine (cmo5U) biosynthesis. May be part of an alternate pathway, which is able to bypass cmo5U biogenesis in a subset of tRNAs under aerobic conditions. The protein is tRNA uridine(34) hydroxylase of Escherichia coli O6:K15:H31 (strain 536 / UPEC).